A 332-amino-acid chain; its full sequence is MISFSSFYQQIADSNLQHWLETLPSILGKWQRDHKHGNLPKWEKVLNKLHYPAPDQVDFVDSVTVGSGEQLSPGEKEKLENLLRLFMPWRKGPFHIHGIHIDTEWRSDWKWDRVKQHISPLKNRTVLDVGCGSGYHMWRMLGSGAKRVVGIDPSPLFLCQFEAVKRLAGPHHPVHLLPLGIEELPPLDAFDTVFSMGVLYHRRSPIDHLLQLRDQLRTGGELVLETLVIDGDENAVLVPQDRYGKMNNVWFIPSVAALMLWLKKCDFTDIRCVDTDVTALAEQRRTDWMPNESLVEYLDPNDITKTVEGYPAPKRATIIAIKNQPNQETVNG.

Residues Lys91, Trp105, Lys110, Gly130, 152–154 (DPS), 181–182 (IE), Met196, Tyr200, and Arg315 each bind carboxy-S-adenosyl-L-methionine.

The protein belongs to the class I-like SAM-binding methyltransferase superfamily. CmoB family. In terms of assembly, homotetramer.

The catalysed reaction is carboxy-S-adenosyl-L-methionine + 5-hydroxyuridine(34) in tRNA = 5-carboxymethoxyuridine(34) in tRNA + S-adenosyl-L-homocysteine + H(+). In terms of biological role, catalyzes carboxymethyl transfer from carboxy-S-adenosyl-L-methionine (Cx-SAM) to 5-hydroxyuridine (ho5U) to form 5-carboxymethoxyuridine (cmo5U) at position 34 in tRNAs. This Shewanella putrefaciens (strain CN-32 / ATCC BAA-453) protein is tRNA U34 carboxymethyltransferase.